An 807-amino-acid polypeptide reads, in one-letter code: Mechanosensitive cation channel TMEM63A (807 aa).

At 1–51 (MTDSPFLELWQSRAVSVREQLGLGDRPNDSYCYNSAKNSTVLQGVTFGGIP) the chain is on the extracellular side. Residue asparagine 38 is glycosylated (N-linked (GlcNAc...) asparagine). Residues 52 to 74 (TVLLIDVSCFLFLILVFSIIRRR) form a helical membrane-spanning segment. Over 75 to 134 (FWDYGRIALVSEADSEPRFQRLSSTSSSGQQDFENELGCCPWLTAIFRLHDDQILEWCGE) the chain is Cytoplasmic. Residues 135 to 167 (DAIHYLSFQRHIIFLLVVVSFLSLCVILPVNLS) traverse the membrane as a helical segment. The Extracellular segment spans residues 168–191 (GDLLDKDPYSFGRTTIANLQTDND). A helical membrane pass occupies residues 192–217 (LLWLHTIFAVIYLFLTVGFMRHHTQS). Residues 218 to 416 (IKYKEENLVR…CWKNLSIQGL (199 aa)) are Cytoplasmic-facing. An intracellular linker IL2; confers mechanosensitivity region spans residues 219 to 414 (KYKEENLVRR…DICWKNLSIQ (196 aa)). A helical membrane pass occupies residues 417 to 444 (RWWLQWLGINFTLFLGLFFLTTPSIILS). Residues 445–462 (TMDKFNVTKPIHALNNPI) are Extracellular-facing. Residue asparagine 450 is glycosylated (N-linked (GlcNAc...) asparagine). A helical transmembrane segment spans residues 463-490 (ISQFFPTLLLWSFSALLPSIVYYSTLLE). Residues 491-495 (SHWTK) are Cytoplasmic-facing. The chain crosses the membrane as a helical span at residues 496-532 (SGENQIMMTKVYIFLIFMVLILPSLGLTSLDFFFRWL). The Extracellular portion of the chain corresponds to 533–554 (FDKTSSEASIRLECVFLPDQGA). A helical transmembrane segment spans residues 555–586 (FFVNYVIASAFIGNGMELLRLPGLILYTFRMI). Positions 555-586 (FFVNYVIASAFIGNGMELLRLPGLILYTFRMI) are gating helix. At 587–606 (MAKTAADRRNVKQNQAFQYE) the chain is on the cytoplasmic side. The chain crosses the membrane as a helical span at residues 607–624 (FGAMYAWMLCVFTVIMAY). The Extracellular portion of the chain corresponds to 625–628 (SITC). Residues 629–651 (PIIAPFGLIYILLKHMVDRHNLY) form a helical membrane-spanning segment. Residues 652–661 (FIYLPAKLEK) lie on the Cytoplasmic side of the membrane. Residues 662-689 (GIHFAAVNQALAAPILCLFWLYFFSFLR) form a helical membrane-spanning segment. Topologically, residues 690 to 694 (LGMKA) are extracellular. The helical transmembrane segment at 695–709 (PATLFTFLVVLLTIL) threads the bilayer. Residues 710–807 (VCLAHTCFGY…GSVAAAPQEA (98 aa)) lie on the Cytoplasmic side of the membrane. Phosphoserine is present on serine 739.

It belongs to the CSC1 (TC 1.A.17) family. Monomer. In terms of processing, N-Glycosylated.

It is found in the lysosome membrane. The protein resides in the early endosome membrane. The protein localises to the cell membrane. The enzyme catalyses Ca(2+)(in) = Ca(2+)(out). Its function is as follows. Mechanosensitive cation channel with low conductance and high activation threshold. In contrast to TMEM63B, does not show phospholipid scramblase activity. Acts as a regulator of lysosomal morphology by mediating lysosomal mechanosensitivity. Important for the baby's first breath and respiration throughout life. Upon lung inflation conducts cation currents in alveolar type 1 and 2 cells triggering lamellar body exocytosis and surfactant secretion into airspace. Also acts as an osmosensitive cation channel preferentially activated by hypotonic stress. The protein is Mechanosensitive cation channel TMEM63A (TMEM63A) of Pongo abelii (Sumatran orangutan).